We begin with the raw amino-acid sequence, 420 residues long: Glutamate-1-semialdehyde 2,1-aminomutase (420 aa).

Residue K259 is modified to N6-(pyridoxal phosphate)lysine.

It belongs to the class-III pyridoxal-phosphate-dependent aminotransferase family. HemL subfamily. It depends on pyridoxal 5'-phosphate as a cofactor.

It is found in the cytoplasm. The enzyme catalyses (S)-4-amino-5-oxopentanoate = 5-aminolevulinate. Its pathway is porphyrin-containing compound metabolism; protoporphyrin-IX biosynthesis; 5-aminolevulinate from L-glutamyl-tRNA(Glu): step 2/2. The protein is Glutamate-1-semialdehyde 2,1-aminomutase of Sulfolobus acidocaldarius (strain ATCC 33909 / DSM 639 / JCM 8929 / NBRC 15157 / NCIMB 11770).